Here is a 398-residue protein sequence, read N- to C-terminus: Nematocin receptor 2 (398 aa).

The Extracellular segment spans residues 1–25 (MNNNTLNITNQRTAAAMSQIYFLVV). N-linked (GlcNAc...) asparagine glycans are attached at residues Asn-3 and Asn-7. Residues 26-46 (YQTAVMIVSLLGNLFLLFVIF) traverse the membrane as a helical segment. Residues 47–58 (RANQVMKRRVSP) are Cytoplasmic-facing. The helical transmembrane segment at 59–79 (VQLLIIHTCVADLLFALLSLG) threads the bilayer. Residues 80 to 99 (TEILTLRTYPQYYGSNFVCK) are Extracellular-facing. A disulfide bond links Cys-98 and Cys-173. Residues 100 to 120 (LMRYVQMFPMYASPFLLVAIS) traverse the membrane as a helical segment. The Cytoplasmic portion of the chain corresponds to 121–143 (ADRYQAICRPLAHFRSSRYRRPN). Residues 144-164 (WMAAIAWGLALVLSIPQFFVW) form a helical membrane-spanning segment. The Extracellular portion of the chain corresponds to 165–187 (TKHSKTGRCSTIYGQNKNTVKIT). A helical membrane pass occupies residues 188-208 (YVIMFNTLAWLLPSILAAVFY). The Cytoplasmic portion of the chain corresponds to 209–271 (YCVCKAVRLS…DRKRVQTVRL (63 aa)). A helical membrane pass occupies residues 272-292 (TITIVACNFFLWMPFCLINVI). Residues 293–302 (QALWPEISHI) lie on the Extracellular side of the membrane. Residues 303-325 (MFINYVAILGNLNSCLNPWIYIL) form a helical membrane-spanning segment. At 326-398 (FNRSHVRKAL…DSTSLKTNSN (73 aa)) the chain is on the cytoplasmic side.

Belongs to the G-protein coupled receptor 1 family. Vasopressin/oxytocin receptor subfamily. As to expression, detected in the ADL sensory neurons, the RMED and RMEV motor neurons, and the PQR tail neuron. In males, detected in SPC tail neurons involved in spicule penetration and sperm transfer, and male-specific oblique muscles involved in vulval contact.

It localises to the cell membrane. Not directly activated by nematocin. May modulate activity of the nematocin receptor ntr-1, leading to reduced intracellular cAMP production. Plays a role in male mating behavior. The polypeptide is Nematocin receptor 2 (Caenorhabditis elegans).